We begin with the raw amino-acid sequence, 363 residues long: 3-dehydroquinate synthase (363 aa).

Residues 134 to 135 (TT), K147, K156, and 174 to 177 (TLIT) each bind NAD(+). Zn(2+)-binding residues include E189, H254, and H271.

It belongs to the sugar phosphate cyclases superfamily. Dehydroquinate synthase family. NAD(+) is required as a cofactor. Co(2+) serves as cofactor. It depends on Zn(2+) as a cofactor.

Its subcellular location is the cytoplasm. The enzyme catalyses 7-phospho-2-dehydro-3-deoxy-D-arabino-heptonate = 3-dehydroquinate + phosphate. It functions in the pathway metabolic intermediate biosynthesis; chorismate biosynthesis; chorismate from D-erythrose 4-phosphate and phosphoenolpyruvate: step 2/7. In terms of biological role, catalyzes the conversion of 3-deoxy-D-arabino-heptulosonate 7-phosphate (DAHP) to dehydroquinate (DHQ). This Prochlorococcus marinus subsp. pastoris (strain CCMP1986 / NIES-2087 / MED4) protein is 3-dehydroquinate synthase.